The following is a 443-amino-acid chain: Threonine/serine transporter TdcC (443 aa).

Helical transmembrane passes span 22–42 (TTWT…FFPI), 44–64 (AGFG…PIAF), 97–117 (GVVI…IYGV), 135–155 (ALNR…IIWF), 163–183 (VMSF…LSLI), 207–227 (ILVT…FSPI), 259–279 (ASIL…FALS), 319–339 (ASII…LGTL), 366–386 (LSMV…PNIL), 389–409 (IEAM…MYAI), and 422–442 (IDNV…VYKV).

Belongs to the amino acid/polyamine transporter 2 family. SdaC/TdcC subfamily.

It is found in the cell inner membrane. The enzyme catalyses L-threonine(in) + H(+)(in) = L-threonine(out) + H(+)(out). It catalyses the reaction L-serine(in) + H(+)(in) = L-serine(out) + H(+)(out). In terms of biological role, involved in the import of threonine and serine into the cell, with the concomitant import of a proton (symport system). The sequence is that of Threonine/serine transporter TdcC from Escherichia fergusonii (strain ATCC 35469 / DSM 13698 / CCUG 18766 / IAM 14443 / JCM 21226 / LMG 7866 / NBRC 102419 / NCTC 12128 / CDC 0568-73).